Here is a 284-residue protein sequence, read N- to C-terminus: 2-dehydro-3-deoxyphosphooctonate aldolase (284 aa).

Belongs to the KdsA family.

The protein resides in the cytoplasm. The catalysed reaction is D-arabinose 5-phosphate + phosphoenolpyruvate + H2O = 3-deoxy-alpha-D-manno-2-octulosonate-8-phosphate + phosphate. It functions in the pathway carbohydrate biosynthesis; 3-deoxy-D-manno-octulosonate biosynthesis; 3-deoxy-D-manno-octulosonate from D-ribulose 5-phosphate: step 2/3. The protein operates within bacterial outer membrane biogenesis; lipopolysaccharide biosynthesis. This Aliivibrio fischeri (strain ATCC 700601 / ES114) (Vibrio fischeri) protein is 2-dehydro-3-deoxyphosphooctonate aldolase.